A 492-amino-acid chain; its full sequence is Trehalose-6-phosphate synthase (492 aa).

Arginine 25 is a binding site for D-glucose 6-phosphate. 45–46 is a binding site for UDP-alpha-D-glucose; the sequence is GG. Tyrosine 101 and aspartate 155 together coordinate D-glucose 6-phosphate. UDP-alpha-D-glucose contacts are provided by arginine 297 and lysine 302. Arginine 335 provides a ligand contact to D-glucose 6-phosphate. Position 400-404 (400-404) interacts with UDP-alpha-D-glucose; sequence LVAKE.

It belongs to the glycosyltransferase 20 family. In terms of assembly, homotetramer.

It carries out the reaction ADP-alpha-D-glucose + D-glucose 6-phosphate = alpha,alpha-trehalose 6-phosphate + ADP + H(+). It catalyses the reaction CDP-alpha-D-glucose + D-glucose 6-phosphate = alpha,alpha-trehalose 6-phosphate + CDP + H(+). The enzyme catalyses GDP-alpha-D-glucose + D-glucose 6-phosphate = alpha,alpha-trehalose 6-phosphate + GDP + H(+). The catalysed reaction is TDP-alpha-D-glucose + D-glucose 6-phosphate = 5-methyl-UDP + alpha,alpha-trehalose 6-phosphate + H(+). It carries out the reaction D-glucose 6-phosphate + UDP-alpha-D-glucose = alpha,alpha-trehalose 6-phosphate + UDP + H(+). It functions in the pathway glycan biosynthesis; trehalose biosynthesis. Functionally, probably involved in the osmoprotection via the biosynthesis of trehalose and in the production of glycogen and alpha-glucan via the TreS-Pep2 branch involved in the biosynthesis of maltose-1-phosphate (M1P). Catalyzes the transfer of glucose from UDP-glucose (UDP-Glc) to D-glucose 6-phosphate (Glc-6-P) to form trehalose-6-phosphate. Probably also able to use ADP-Glc, CDP-Glc, GDP-Glc and TDP-Glc as glucosyl donors. In Mycolicibacterium paratuberculosis (strain ATCC BAA-968 / K-10) (Mycobacterium paratuberculosis), this protein is Trehalose-6-phosphate synthase.